The chain runs to 277 residues: E3 ubiquitin-protein ligase CCNB1IP1 (277 aa).

The RING-type; atypical zinc finger occupies 4–51 (CEDMLLCNYRKCRIKLSGYAWVTACSHIFCDQHGSGEFSRSPAICPAC). A coiled-coil region spans residues 127 to 182 (QQIQSKDVELTSMKGEVTSMKKVLEEYKKKFSDISEKLMERNRQYQKLQGLYDSLR).

In terms of assembly, interacts with CCNB1, UBE2L3 and NF2. Ubiquitinated; autoubiquitinated. In terms of processing, phosphorylated by CDK1 on serine or threonine residues (in vitro). In terms of tissue distribution, highly expressed in heart. Detected at intermediate levels in liver and kidney, and at low levels in placenta, brain and lung.

The protein resides in the nucleus. It is found in the chromosome. It catalyses the reaction S-ubiquitinyl-[E2 ubiquitin-conjugating enzyme]-L-cysteine + [acceptor protein]-L-lysine = [E2 ubiquitin-conjugating enzyme]-L-cysteine + N(6)-ubiquitinyl-[acceptor protein]-L-lysine.. The protein operates within protein modification; protein ubiquitination. Its function is as follows. Ubiquitin E3 ligase that acts as a limiting factor for crossing-over during meiosis: required during zygonema to limit the colocalization of RNF212 with MutS-gamma-associated recombination sites and thereby establish early differentiation of crossover and non-crossover sites. Later, it is directed by MutL-gamma to stably accumulate at designated crossover sites. Probably promotes the dissociation of RNF212 and MutS-gamma to allow the progression of recombination and the implementation of the final steps of crossing over. Modulates cyclin-B levels and participates in the regulation of cell cycle progression through the G2 phase. Overexpression causes delayed entry into mitosis. This Homo sapiens (Human) protein is E3 ubiquitin-protein ligase CCNB1IP1 (CCNB1IP1).